The following is a 608-amino-acid chain: Dolichyl-diphosphooligosaccharide--protein glycosyltransferase subunit 1 (608 aa).

The first 25 residues, 1 to 25, serve as a signal peptide directing secretion; that stretch reads MESPVALLLLLLLCLGALAPTPGSA. The Lumenal segment spans residues 26–440; sequence SSEAPPLVNE…FNKVLMLQEP (415 aa). N6-acetyllysine is present on lysine 188. Residue asparagine 300 is glycosylated (N-linked (GlcNAc...) asparagine). The chain crosses the membrane as a helical span at residues 441 to 458; the sequence is LLVVAAFYILFFTVIIYV. Over 459 to 608 the chain is Cytoplasmic; sequence RLDFSITKDP…TKIDHILDAL (150 aa). Residue lysine 539 is modified to N6-acetyllysine; alternate. Residue lysine 539 forms a Glycyl lysine isopeptide (Lys-Gly) (interchain with G-Cter in SUMO2); alternate linkage.

This sequence belongs to the OST1 family. In terms of assembly, component of the oligosaccharyltransferase (OST) complex. OST exists in two different complex forms which contain common core subunits RPN1, RPN2, OST48, OST4, DAD1 and TMEM258, either STT3A or STT3B as catalytic subunits, and form-specific accessory subunits. STT3A complex assembly occurs through the formation of 3 subcomplexes. Subcomplex 1 contains RPN1 and TMEM258, subcomplex 2 contains the STT3A-specific subunits STT3A, DC2/OSTC, and KCP2 as well as the core subunit OST4, and subcomplex 3 contains RPN2, DAD1, and OST48. The STT3A complex can form stable complexes with the Sec61 complex or with both the Sec61 and TRAP complexes. Interacts with TMEM35A/NACHO. Ubiquitinated by the ECS(ASB11) complex. Ubiquitinated by RNF128, leading to degradation in a proteasome/lysosome-dependent manner. In terms of processing, ufmylated by UFL1 in response to endoplasmic reticulum stress, promoting reticulophagy of endoplasmic reticulum sheets.

The protein localises to the endoplasmic reticulum membrane. Its pathway is protein modification; protein glycosylation. Subunit of the oligosaccharyl transferase (OST) complex that catalyzes the initial transfer of a defined glycan (Glc(3)Man(9)GlcNAc(2) in eukaryotes) from the lipid carrier dolichol-pyrophosphate to an asparagine residue within an Asn-X-Ser/Thr consensus motif in nascent polypeptide chains, the first step in protein N-glycosylation. N-glycosylation occurs cotranslationally and the complex associates with the Sec61 complex at the channel-forming translocon complex that mediates protein translocation across the endoplasmic reticulum (ER). All subunits are required for a maximal enzyme activity. This is Dolichyl-diphosphooligosaccharide--protein glycosyltransferase subunit 1 from Mus musculus (Mouse).